A 20-amino-acid chain; its full sequence is Ribulose bisphosphate carboxylase small subunit (20 aa).

The protein belongs to the RuBisCO small chain family. In terms of assembly, heterohexadecamer of 8 large and 8 small subunits.

It is found in the plastid. The protein localises to the chloroplast. In terms of biological role, ruBisCO catalyzes two reactions: the carboxylation of D-ribulose 1,5-bisphosphate, the primary event in carbon dioxide fixation, as well as the oxidative fragmentation of the pentose substrate in the photorespiration process. Both reactions occur simultaneously and in competition at the same active site. Although the small subunit is not catalytic it is essential for maximal activity. The polypeptide is Ribulose bisphosphate carboxylase small subunit (Chattonella marina var. antiqua (Red tide flagellate)).